The following is a 458-amino-acid chain: Bifunctional protein GlmU (458 aa).

The pyrophosphorylase stretch occupies residues M1–R232. Residues L10–G13, K24, Q79, G84–T85, Y106–D108, G142, E157, N172, and N230 contribute to the UDP-N-acetyl-alpha-D-glucosamine site. D108 provides a ligand contact to Mg(2+). Residue N230 participates in Mg(2+) binding. The segment at Q233–A253 is linker. Residues G254–K458 are N-acetyltransferase. UDP-N-acetyl-alpha-D-glucosamine is bound by residues R336 and K354. The Proton acceptor role is filled by H366. Y369 and N380 together coordinate UDP-N-acetyl-alpha-D-glucosamine. Acetyl-CoA-binding positions include A383, N389 to Y390, S408, A426, and R443.

The protein in the N-terminal section; belongs to the N-acetylglucosamine-1-phosphate uridyltransferase family. This sequence in the C-terminal section; belongs to the transferase hexapeptide repeat family. As to quaternary structure, homotrimer. Requires Mg(2+) as cofactor.

The protein resides in the cytoplasm. The enzyme catalyses alpha-D-glucosamine 1-phosphate + acetyl-CoA = N-acetyl-alpha-D-glucosamine 1-phosphate + CoA + H(+). It carries out the reaction N-acetyl-alpha-D-glucosamine 1-phosphate + UTP + H(+) = UDP-N-acetyl-alpha-D-glucosamine + diphosphate. Its pathway is nucleotide-sugar biosynthesis; UDP-N-acetyl-alpha-D-glucosamine biosynthesis; N-acetyl-alpha-D-glucosamine 1-phosphate from alpha-D-glucosamine 6-phosphate (route II): step 2/2. It functions in the pathway nucleotide-sugar biosynthesis; UDP-N-acetyl-alpha-D-glucosamine biosynthesis; UDP-N-acetyl-alpha-D-glucosamine from N-acetyl-alpha-D-glucosamine 1-phosphate: step 1/1. The protein operates within bacterial outer membrane biogenesis; LPS lipid A biosynthesis. Functionally, catalyzes the last two sequential reactions in the de novo biosynthetic pathway for UDP-N-acetylglucosamine (UDP-GlcNAc). The C-terminal domain catalyzes the transfer of acetyl group from acetyl coenzyme A to glucosamine-1-phosphate (GlcN-1-P) to produce N-acetylglucosamine-1-phosphate (GlcNAc-1-P), which is converted into UDP-GlcNAc by the transfer of uridine 5-monophosphate (from uridine 5-triphosphate), a reaction catalyzed by the N-terminal domain. This chain is Bifunctional protein GlmU, found in Psychrobacter cryohalolentis (strain ATCC BAA-1226 / DSM 17306 / VKM B-2378 / K5).